Here is a 729-residue protein sequence, read N- to C-terminus: Catalase-peroxidase 1 (729 aa).

The tryptophyl-tyrosyl-methioninium (Trp-Tyr) (with M-252) cross-link spans 98 to 226 (WHSAGSYRIA…LAAVMMGLIY (129 aa)). His99 (proton acceptor) is an active-site residue. A cross-link (tryptophyl-tyrosyl-methioninium (Tyr-Met) (with W-98)) is located at residues 226–252 (YVNPEGVDGNPDPLRTAKDIRETFARM). Residue His267 participates in heme b binding.

It belongs to the peroxidase family. Peroxidase/catalase subfamily. As to quaternary structure, homodimer or homotetramer. Requires heme b as cofactor. In terms of processing, formation of the three residue Trp-Tyr-Met cross-link is important for the catalase, but not the peroxidase activity of the enzyme.

It catalyses the reaction H2O2 + AH2 = A + 2 H2O. The catalysed reaction is 2 H2O2 = O2 + 2 H2O. Functionally, bifunctional enzyme with both catalase and broad-spectrum peroxidase activity. In Cellvibrio japonicus (strain Ueda107) (Pseudomonas fluorescens subsp. cellulosa), this protein is Catalase-peroxidase 1.